A 37-amino-acid polypeptide reads, in one-letter code: Trypsin inhibitor 3 (37 aa).

Cystine bridges form between C4/C21, C11/C25, and C20/C36.

Functionally, trypsin inhibitor. The polypeptide is Trypsin inhibitor 3 (Spinacia oleracea (Spinach)).